Here is a 657-residue protein sequence, read N- to C-terminus: MRGCLQSVKWLTSALRPSQSLASSTRYPRRLLSTSAPRNAQVRKPASEVEQRIAAIPIERFRNFCIVAHVDHGKSTLSDRLLELTGTIEAGANKQVLDKLDVERERGITVKAQTCSMLYNHQGEDYLLHLVDTPGHVDFRAEVSRSYASCGGALLLVDASQGIQAQTVANFYLAFAEGLKLVPVINKVDLPSADPQRALDQMKNTFELDPESAVLVSAKTGLNVSQLLPTVIEQIPAPVGDRTKPLRMLLVDSWYSTYKGVILLVRLFDGEIRVGDQVVSFATGLKYTVGEVGIMYPWQTAQSVLRAGQVGYIYFNPAMKRSQEAKVGDTYTKVGSEKLVQPLPGFEEPKAMVFVAAYPVDASDFPHLEDSINQLILNDRSVTLQKESSEALGAGFRLGFLGTLHCSVFEDRLRQEHGASIIITPPTVPFKVIWKDGKEEIITNPALFPEEDTLRAKVTELQEPFVLATLTFPEEYLGRVIELCESNRGEQKSLEFFTSTQVILKYELPLAQLVDDFFGKLKGSTKGYASLDYEESGWRRSNISKLQLLVNKVPVDAVSRVVHSSQVQRLGRLWVSKFKEHVDRQMFEVVIQAAAGRNVVARESIKPFRKDVLQKLHAADVTRRKKLLEKQKEGRKKLKAVGNVVIEHKAFQAFLAK.

Residues 1-39 (MRGCLQSVKWLTSALRPSQSLASSTRYPRRLLSTSAPRN) constitute a mitochondrion transit peptide. The tr-type G domain maps to 59 to 239 (ERFRNFCIVA…TVIEQIPAPV (181 aa)). GTP contacts are provided by residues 109–116 (TVKAQTCS), 173–177 (LAFAE), and 227–230 (LLPT).

The protein belongs to the TRAFAC class translation factor GTPase superfamily. Classic translation factor GTPase family. LepA subfamily.

It localises to the mitochondrion inner membrane. It carries out the reaction GTP + H2O = GDP + phosphate + H(+). Promotes mitochondrial protein synthesis. May act as a fidelity factor of the translation reaction, by catalyzing a one-codon backward translocation of tRNAs on improperly translocated ribosomes. Binds to mitochondrial ribosomes in a GTP-dependent manner. This chain is Translation factor GUF1, mitochondrial, found in Ajellomyces capsulatus (strain NAm1 / WU24) (Darling's disease fungus).